The following is a 179-amino-acid chain: Large ribosomal subunit protein uL5 (179 aa).

This sequence belongs to the universal ribosomal protein uL5 family. In terms of assembly, part of the 50S ribosomal subunit; part of the 5S rRNA/L5/L18/L25 subcomplex. Contacts the 5S rRNA and the P site tRNA. Forms a bridge to the 30S subunit in the 70S ribosome.

Functionally, this is one of the proteins that bind and probably mediate the attachment of the 5S RNA into the large ribosomal subunit, where it forms part of the central protuberance. In the 70S ribosome it contacts protein S13 of the 30S subunit (bridge B1b), connecting the 2 subunits; this bridge is implicated in subunit movement. Contacts the P site tRNA; the 5S rRNA and some of its associated proteins might help stabilize positioning of ribosome-bound tRNAs. In Xylella fastidiosa (strain M12), this protein is Large ribosomal subunit protein uL5.